A 63-amino-acid chain; its full sequence is Jingdongin-1 (63 aa).

A signal peptide spans methionine 1–cysteine 22. Residues glutamate 23–glutamate 44 constitute a propeptide that is removed on maturation. Cysteine 57 and cysteine 63 form a disulfide bridge.

Expressed by the skin glands.

The protein localises to the secreted. Its function is as follows. The synthetic peptide has antimicrobial activity against Gram-negative bacterium B.dysenteriae (MIC=35 ug/ml), against Gram-positive bacteria S.aureus ATCC 2592 (MIC=4.7 ug/ml) and B.subtilis ATCC 6633 (MIC=9.38 ug/ml) and against fungus C.albicans (MIC=18.75 ug/ml). Has no activity against Gram-negative bacterium E.coli ATCC 25922 but exhibits low hemolytic activity at concentrations up to 200 ug/ml. This Amolops jingdongensis (Chinese torrent frog) protein is Jingdongin-1.